Here is a 197-residue protein sequence, read N- to C-terminus: Holliday junction branch migration complex subunit RuvA (197 aa).

Positions 1–64 are domain I; it reads MIGHLEGRLR…EDAIQLYGFR (64 aa). Residues 65-143 are domain II; the sequence is TVAEKDMFLR…VKKGREAEQP (79 aa). The interval 144–145 is flexible linker; it reads AP. The tract at residues 146-197 is domain III; that stretch reads AAESSYGDAYSALVNLGYRPAEAEKALGKAIKSLGADPPVEKLLKETLRLLA.

Belongs to the RuvA family. As to quaternary structure, homotetramer. Forms an RuvA(8)-RuvB(12)-Holliday junction (HJ) complex. HJ DNA is sandwiched between 2 RuvA tetramers; dsDNA enters through RuvA and exits via RuvB. An RuvB hexamer assembles on each DNA strand where it exits the tetramer. Each RuvB hexamer is contacted by two RuvA subunits (via domain III) on 2 adjacent RuvB subunits; this complex drives branch migration. In the full resolvosome a probable DNA-RuvA(4)-RuvB(12)-RuvC(2) complex forms which resolves the HJ.

The protein resides in the cytoplasm. Its function is as follows. The RuvA-RuvB-RuvC complex processes Holliday junction (HJ) DNA during genetic recombination and DNA repair, while the RuvA-RuvB complex plays an important role in the rescue of blocked DNA replication forks via replication fork reversal (RFR). RuvA specifically binds to HJ cruciform DNA, conferring on it an open structure. The RuvB hexamer acts as an ATP-dependent pump, pulling dsDNA into and through the RuvAB complex. HJ branch migration allows RuvC to scan DNA until it finds its consensus sequence, where it cleaves and resolves the cruciform DNA. The sequence is that of Holliday junction branch migration complex subunit RuvA from Syntrophobacter fumaroxidans (strain DSM 10017 / MPOB).